Reading from the N-terminus, the 132-residue chain is Extracellular small neutral protease (132 aa).

Ca(2+) contacts are provided by aspartate 76 and threonine 78. Histidine 83 provides a ligand contact to Zn(2+). The active site involves glutamate 84. 2 residues coordinate Zn(2+): histidine 87 and aspartate 93. Cysteine 99 and cysteine 112 are joined by a disulfide.

The protein belongs to the peptidase M7 family. It depends on Ca(2+) as a cofactor. Zn(2+) serves as cofactor.

Its subcellular location is the secreted. The enzyme catalyses Hydrolyzes proteins with a preference for Tyr or Phe in the P1' position. Has no action on amino-acid p-nitroanilides.. Functionally, specifically hydrolyzes the peptide bond at the imino side of aromatic residues. The protein is Extracellular small neutral protease (snpA) of Streptomyces caespitosus.